A 58-amino-acid chain; its full sequence is Small ribosomal subunit protein uS14 (58 aa).

The segment at 1-21 (MSESETEQTGEHASHRTGQTH) is disordered. Over residues 9-21 (TGEHASHRTGQTH) the composition is skewed to basic and acidic residues. The Zn(2+) site is built by Cys-23, Cys-26, Cys-41, and Cys-44.

The protein belongs to the universal ribosomal protein uS14 family. Zinc-binding uS14 subfamily. As to quaternary structure, part of the 30S ribosomal subunit. Zn(2+) serves as cofactor.

Binds 16S rRNA, required for the assembly of 30S particles. The sequence is that of Small ribosomal subunit protein uS14 from Haloquadratum walsbyi (strain DSM 16790 / HBSQ001).